A 623-amino-acid chain; its full sequence is UvrABC system protein C (623 aa).

One can recognise a GIY-YIG domain in the interval 27-105 (GSPGVYRMLD…IKQLKPRYNV (79 aa)). A UVR domain is found at 215–250 (TKVQANLAEQMQAASEAMEFERAAALRDRIKALTQV).

This sequence belongs to the UvrC family. Interacts with UvrB in an incision complex.

The protein localises to the cytoplasm. Its function is as follows. The UvrABC repair system catalyzes the recognition and processing of DNA lesions. UvrC both incises the 5' and 3' sides of the lesion. The N-terminal half is responsible for the 3' incision and the C-terminal half is responsible for the 5' incision. In Cereibacter sphaeroides (strain ATCC 17023 / DSM 158 / JCM 6121 / CCUG 31486 / LMG 2827 / NBRC 12203 / NCIMB 8253 / ATH 2.4.1.) (Rhodobacter sphaeroides), this protein is UvrABC system protein C.